The following is a 333-amino-acid chain: Cilia- and flagella-associated protein 119 (333 aa).

Residues 1-10 show a composition bias toward polar residues; that stretch reads MITPSSSQSL. Disordered stretches follow at residues 1–70 and 309–333; these read MITP…ANLF and RLSSKLAALEQPFQTPPSKGKTKTK. S34 carries the phosphoserine modification. The segment covering 44 to 58 has biased composition (polar residues); that stretch reads TDMQTESPAEATSSP. A coiled-coil region spans residues 284-319; it reads IKSQLSKELRQLQQLVEERLKESEERLSSKLAALEQ.

It localises to the cell projection. Its subcellular location is the cilium. It is found in the flagellum. The protein resides in the cytoplasmic vesicle. The protein localises to the secretory vesicle. It localises to the acrosome. Its subcellular location is the cytoplasm. This Mus musculus (Mouse) protein is Cilia- and flagella-associated protein 119.